The chain runs to 426 residues: Enolase (426 aa).

Gln163 provides a ligand contact to (2R)-2-phosphoglycerate. The active-site Proton donor is Glu205. Residues Asp242, Glu283, and Asp310 each coordinate Mg(2+). Lys335, Arg364, Ser365, and Lys386 together coordinate (2R)-2-phosphoglycerate. Lys335 (proton acceptor) is an active-site residue.

The protein belongs to the enolase family. Mg(2+) is required as a cofactor.

It is found in the cytoplasm. Its subcellular location is the secreted. It localises to the cell surface. The catalysed reaction is (2R)-2-phosphoglycerate = phosphoenolpyruvate + H2O. The protein operates within carbohydrate degradation; glycolysis; pyruvate from D-glyceraldehyde 3-phosphate: step 4/5. Its function is as follows. Catalyzes the reversible conversion of 2-phosphoglycerate (2-PG) into phosphoenolpyruvate (PEP). It is essential for the degradation of carbohydrates via glycolysis. The protein is Enolase of Clavibacter michiganensis subsp. michiganensis (strain NCPPB 382).